We begin with the raw amino-acid sequence, 158 residues long: MAFQILLNLVIAVIWVNFQNSYTAVDFLIGYVVGIFILFVLRRFLRFDFYMRRIWAIIKLISLFFKELILANIDVIKIVLSPKMNIQPGIVAVPTKLKTDWELSLLASLISLTPGTLSMDFSDDNKYIYIHAIDVPNKEKMIRDIHDTFERAILEVTK.

Transmembrane regions (helical) follow at residues 22 to 41 (YTAVDFLIGYVVGIFILFVL) and 54 to 76 (IWAIIKLISLFFKELILANIDVI).

It belongs to the CPA3 antiporters (TC 2.A.63) subunit E family. Forms a heterooligomeric complex that consists of seven subunits: MrpA, MrpB, MrpC, MrpD, MrpE, MrpF and MrpG.

Its subcellular location is the cell membrane. Mnh complex is a Na(+)Li(+)/H(+) antiporter involved in Na(+) and/or Li(+) excretion and Na(+) resistance. Na(+)/H(+) antiport consumes a transmembrane electrical potential, and is thus inferred to be electrogenic. Does not transport K(+), Ca(2+) or Mg(2+). Functionally, mrp complex is a Na(+)/H(+) antiporter involved in Na(+) excretion and Na(+) resistance. This is Na(+)/H(+) antiporter subunit E (mrpE) from Alkalihalophilus pseudofirmus (strain ATCC BAA-2126 / JCM 17055 / OF4) (Bacillus pseudofirmus).